Reading from the N-terminus, the 217-residue chain is Germin-like protein subfamily 1 member 1 (217 aa).

The signal sequence occupies residues 1–18 (MILNILLTLTLLMGRVKS). The cysteines at positions 27 and 45 are disulfide-linked. Positions 59–209 (SALSRPGNTK…AYDINGQDVA (151 aa)) constitute a Cupin type-1 domain. N-linked (GlcNAc...) asparagine glycosylation is present at N75. Residues H108, H110, E115, and H154 each coordinate Mn(2+).

This sequence belongs to the germin family. In terms of assembly, oligomer (believed to be a pentamer but probably hexamer).

Its subcellular location is the secreted. It is found in the extracellular space. It localises to the apoplast. In terms of biological role, may play a role in plant defense. Probably has no oxalate oxidase activity even if the active site is conserved. In Arabidopsis thaliana (Mouse-ear cress), this protein is Germin-like protein subfamily 1 member 1 (GLP7).